We begin with the raw amino-acid sequence, 191 residues long: Large ribosomal subunit protein uL22 (191 aa).

Positions 159 to 168 (VPKGEDDTAQ) are enriched in basic and acidic residues. Residues 159–191 (VPKGEDDTAQKKKVSQKKLKKQKLKAALSGGAD) form a disordered region. A compositionally biased stretch (basic residues) spans 169 to 182 (KKKVSQKKLKKQKL).

This sequence belongs to the universal ribosomal protein uL22 family.

The protein is Large ribosomal subunit protein uL22 (RPL17) of Suberites domuncula (Sponge).